The chain runs to 517 residues: Ovoinhibitor (517 aa).

Kazal-like domains are found at residues 67-132 (FGIE…ECRP), 133-197 (KHVT…ECKL), 198-263 (EIGS…KCRQ), 264-329 (EIPE…RCKE), 330-394 (RSTP…RCRE), 395-460 (EVPE…RCEE), and 461-517 (DITK…MAAC). The N-linked (GlcNAc...) asparagine glycan is linked to N72. 21 disulfide bridges follow: C73–C112, C90–C109, C98–C130, C139–C177, C155–C174, C163–C195, C204–C243, C221–C240, C229–C261, C270–C309, C287–C306, C295–C327, C336–C374, C352–C371, C360–C392, C401–C440, C418–C437, C426–C458, C467–C499, C477–C496, and C485–C517. A glycan (N-linked (GlcNAc...) asparagine) is linked at N186. N506 is a glycosylation site (N-linked (GlcNAc...) asparagine).

Post-translationally, glycosylated. In terms of tissue distribution, expressed in oviduct (at protein level). Expressed in egg white (at protein level). Expressed in egg yolk plasma of non-fertilized eggs (at protein level). Expressed in the magnum of the oviduct (at protein level). Expressed in oviduct. Expressed in liver. Expressed in the cortico-medullary border region of the bursa of Fabricius by the bursal secretory dendritic-like cells. Highly expressed in the magnum of the oviduct, and at a lower level in uterus. Weakly expressed in white isthmus and very weakly in infundibulum. Not expressed in duodenum and kidney.

The protein resides in the secreted. Functionally, serine protease inhibitor involved in antimicrobial egg defense preventing contamination of table eggs (non-fertilized eggs) and protecting the chick embryo (fertilized eggs). Inhibits trypsin, chymotrypsin, elastase, subtilisin and a proteinase of fungus Aspergillus oryzae. Inhibits calcium-activated potassium channels KCNMA1 (bovine) and slo (Drosophila). Has antibacterial activity against B.thuringiensis LMSA 3.06.004, but not against S.aureus CIP 103 811, P.aeruginosa PAO1, B.cereus ATCC6464 or B.subtilis ATCC 6633. The chain is Ovoinhibitor from Gallus gallus (Chicken).